A 3411-amino-acid polypeptide reads, in one-letter code: MSGRKAQGKTLGVNMVRRGVRSLSNKIKQKTKQIGNRPGPSRGVQGFIFFFLFNILTGKKITAHLKRLWKMLDPRQGLAVLRKVKRVVASLMRGLSSRKRRSHDALAVQFLILGMLLMAGGVTLVRKNRWLLLNVTSEDLGKTFSVGAGNCTTNILEAKYWCPDSMEYNCPNLSPREEPDDIDCWCYGVENVRVAYGKCDSAGRSRRSRRAIDLPTHENHGLKTRQEKWMTGRMGERQLQKIERWLVRNPFFAVTALTIAYLVGSNMTQRVVIALLVLAVGPAYSAHCIGITDRDFIEGVHGGTWVSATLEQDKCVTVMAPDKPSLDISLETVAIDGPAEARKVCYNAVLTHVKINDKCPSTGEAHLAEENEGDNACKRTYSDRGWGNGCGLFGKGSIVACAKFTCAKSMSLFEVDQTKIQYVIRAQLHVGAKQENWNTDIKTLKFDALSGSQEAEFTGYGKATLECQVQTAVDFGNSYIAEMEKESWIVDRQWAQDLTLPWQSGSGGVWREMHHLVEFEPPHAATIRVLALGNQEGSLKTALTGAMRVTKDTNDNNLYKLHGGHVSCRVKLSALTLKGTSYKMCTDKMSFVKNPTDTGHGTVVMQVKVPKGAPCKIPVIVADDLTAAINKGILVTVNPIASTNDDEVLIEVNPPFGDSYIIVGTGDSRLTYQWHKEGSSIGKLFTQTMKGAERLAVMGDAAWDFSSAGGFLTSVGKGIHTVFGSAFQGLFGGLSWITKVIMGAVLIWVGINTRNMTMSMSMILVGVIMMFLSLGVGADQGCAINFGKRELKCGDGIFIFRDSDDWLNKYSYYPEDPVKLASIVKASFEEGKCGLNSVDSLEHEMWRSRADEINAILEENEVDISVVVQDPKNVYQRGTHPFSRIRDGLQYGWKTWGKNLVFSPGRKNGSFIIDGKSRKECPFSNRVWNSFQIEEFGTGVFTTRVYMDAVFEYTIDCDGSILGAAVNGKKSAHGSPTFWMGSHEVNGTWMIHTLEALDYKECEWPLTHTIGTSVEESEMFMPRSIGGPVSSHNHIPGYKVQTNGPWMQVPLEVRREACPGTSVIIDGNCDGRGKSTRSTTDSGKIIPEWCCRSCTMPPVSFHGSDGCWYPMEIRPRKTHESHLVRSWVTAGEIHAVPFGLVSMMIAMEVVLRKRQGPKQMLVGGVVLLGAMLVGQVTLLDLLKLTVAVGLHFHEMNNGGDAMYMALIAAFSIRPGLLIGFGLRTLWSPRERLVLTLGAAMVEIALGGMMGGLWKYLNAVSLCILTINAVASRKASNTILPLMALLTPVTMAEVRLAAMLFCTVVIIGVLHQNSKDTSMQKTIPLVALTLTSYLGLTQPFLGLCAFLATRLFGRRSIPVNEALAAAGLVGVLAGLAFQEMENFLGPIAVGGILMMLVSVAGRVDGLELRKLGEVSWEEEAEISGSSARYDVALSEQGEFKLLSEEKVPWDQVVMTSLALVGAAIHPFALLLVLAGWLFHVKGARRSGDVLWDIPTPKIIEECEHLEDGIYGIFQSTFLGASQRGVGVAQGGVFHTMWHVTRGAFLVRNGKKLIPSWASVKEDLVAYGGSWKLEGRWDGEEEVQLIAAVPGKNVVNVQTKPSLFKVRNGGEIGAVALDYPSGTSGSPIVNRNGEVIGLYGNGILVGDNSFVSAISQTEVKEEGKEELQEIPTMLKKGMTTILDFHPGAGKTRRFLPQILAECARRRLRTLVLAPTRVVLSEMKEAFHGLDVKFHTQAFSAHGSGREVIDAMCHATLTYRMLEPTRIVNWEVIIMDEAHFLDPASIAARGWAAHRARANESATILMTATPPGTSDEFPHSNGEIEDVQTDIPSEPWNTGHDWILADKRPTAWFLPSIRAANVMAASLRKAGKSVVVLNRKTFEREYPTIKQKKPDFILATDIAEMGANLCVERVLDCRTAFKPVLVDEGRKVAIKGPLRISASSAAQRRGRIGRNPNRDGDSYYYSEPTSEDNAHHVCWLEASMLLDNMEVRGGMVAPLYGVEGTKTPVSPGEMRLRDDQRKVFRELVRNCDQPVWLSWQVAKAGLKTNDRKWCFEGPDEHEILNDSGETVKCRAPGGAKKPLRPRWCDERVSSDQSALADFIKFAEGRRGAAEVLVVLSELPDFLAKKGGEAMDTISVFLHSEEGSRAYRNALSMMPEAMTIAMLFILAGLLTSGMVIFFMSPKGISRMSMAMGTMAGCGYLMFLGGVKPTHISYIMLIFFVLMVVVIPEPGQQRSIQDNQVAYLIIGILTLVSVVAANELGMLEKTKEDLFGKKDLIPSSASPWSWPDLDLKPGAAWTVYVGIVTMLSPMLHHWIKVEYGNLSLSGIAQSASVLSFMDKGIPFMKMNISVIILLVSGWNSITVMPLLCGIGCAMLHWSLILPGIKAQQSKLAQRRVFHGVAKNPVVDGNPTVDIEEAPEMPALYEKKLALYLLLALSLASVAMCRTPFSLAEGIVLASAALGPLIEGNTSLLWNGPMAVSMTGVMRGNYYAFVGVMYNLWKMKTGRRGRANGKTLGEVWKRELNLLDKQQFELYKRTDIVEVDRDTARRHLAEGKVDTGVAVSRGTAKLRWFHERGYVKLEGRVTDLGCGRGGWCYYAAAQKEVSGVKGFTLGRDGHEKPMNVQSLGWNIITFKDKTDIHRLEPMKCDTLLCDIGESSSSSVTEGERTMRVLDTVEKWLACGVDNFCVKVLAPYMPDVLEKLELLQRRFGGTVIRNPLSRNSTHEMYYVSGARSNVTFTVNQTSRLLMRRMRRPTGKVTLEADVILPIGTRSVETDKGPLDREAIEERVERIKSEYMTTWFYDNDNPYRTWHYCGSYVTKTSGSAASMVNGVIKILTYPWDRIEEVTRMAMTDTTPFGQQRVFKEKVDTRAKDPPAGTRKIMKVVNRWLFRHLAREKNPRLCTKEEFIAKVRSHAAIGAYLEEQEQWKTANEAVQDPKFWELVDEERKLHQQGRCRTCVYNMMGKREKKLSEFGKAKGSRAIWYMWLGARYLEFEALGFLNEDHWASRENSGGGVEGIGLQYLGYVIRDLAAMDGGGFYADDTAGWDTRITEADLDDEQEILNYMSPHHKKLAQAVMEMTYKNKVVKVLRPAPGGKAYMDVISRRDQRGSGQVVTYALNTITNLKVQLIRMAEAEMVIHHQHVQDCDESALARLEAWLTEHGCDRLKRMAVSGDDCVVRPIDDRFGLALSHLNAMSKVRKDISEWQPSKGWNDWENVPFCSHHFHELHLKDGRRIVVPCREQDELIGRGRVSPGNGWMIKETACLSKAYANMWSLMYFHKRDMRLLSLAVSSAVPTSWVPQGRTTWSIHGKGEWMTTEDMLGVWNRVWITNNPHMQDKTVVKEWRDVPYLTKRQDKLCGSLIGMTNRATWASHIHLVIHRIRTLIGQEKYTDYLTVMDRYSVDADLQPGELI.

Residues 1 to 104 (MSGRKAQGKT…LSSRKRRSHD (104 aa)) are Cytoplasmic-facing. Residues 102–121 (SHDALAVQFLILGMLLMAGG) constitute a propeptide, ER anchor for the capsid protein C, removed in mature form by serine protease NS3. Residues 105–125 (ALAVQFLILGMLLMAGGVTLV) traverse the membrane as a helical segment. The Extracellular portion of the chain corresponds to 126 to 244 (RKNRWLLLNV…GERQLQKIER (119 aa)). N-linked (GlcNAc...) asparagine; by host glycosylation is found at asparagine 134 and asparagine 150. The chain crosses the membrane as a helical span at residues 245-265 (WLVRNPFFAVTALTIAYLVGS). Over 266–270 (NMTQR) the chain is Cytoplasmic. A helical membrane pass occupies residues 271–285 (VVIALLVLAVGPAYS). At 286-730 (AHCIGITDRD…TVFGSAFQGL (445 aa)) the chain is on the extracellular side. Cystine bridges form between cysteine 288/cysteine 315, cysteine 345/cysteine 401, cysteine 345/cysteine 406, cysteine 359/cysteine 390, cysteine 377/cysteine 401, cysteine 377/cysteine 406, cysteine 467/cysteine 568, and cysteine 585/cysteine 615. The tract at residues 383–396 (DRGWGNGCGLFGKG) is fusion peptide. The helical transmembrane segment at 731 to 751 (FGGLSWITKVIMGAVLIWVGI) threads the bilayer. Residues 752–757 (NTRNMT) are Extracellular-facing. A helical membrane pass occupies residues 758 to 778 (MSMSMILVGVIMMFLSLGVGA). The Extracellular portion of the chain corresponds to 779–1132 (DQGCAINFGK…LVRSWVTAGE (354 aa)). 6 cysteine pairs are disulfide-bonded: cysteine 782–cysteine 793, cysteine 833–cysteine 921, cysteine 957–cysteine 1002, cysteine 1058–cysteine 1107, cysteine 1069–cysteine 1091, and cysteine 1090–cysteine 1094. 2 N-linked (GlcNAc...) asparagine; by host glycosylation sites follow: asparagine 908 and asparagine 986. Residues 1133–1153 (IHAVPFGLVSMMIAMEVVLRK) traverse the membrane as a helical segment. Residues 1154-1201 (RQGPKQMLVGGVVLLGAMLVGQVTLLDLLKLTVAVGLHFHEMNNGGDA) are Cytoplasmic-facing. A helical membrane pass occupies residues 1202-1222 (MYMALIAAFSIRPGLLIGFGL). The Lumenal portion of the chain corresponds to 1223-1287 (RTLWSPRERL…ILPLMALLTP (65 aa)). The helical transmembrane segment at 1288-1308 (VTMAEVRLAAMLFCTVVIIGV) threads the bilayer. The Cytoplasmic segment spans residues 1309–1355 (LHQNSKDTSMQKTIPLVALTLTSYLGLTQPFLGLCAFLATRLFGRRS). A helical membrane pass occupies residues 1356-1376 (IPVNEALAAAGLVGVLAGLAF). The Lumenal segment spans residues 1377-1378 (QE). The chain crosses the membrane as a helical span at residues 1379 to 1399 (MENFLGPIAVGGILMMLVSVA). The Cytoplasmic portion of the chain corresponds to 1400 to 1456 (GRVDGLELRKLGEVSWEEEAEISGSSARYDVALSEQGEFKLLSEEKVPWDQVVMTSL). The segment at 1407–1446 (LRKLGEVSWEEEAEISGSSARYDVALSEQGEFKLLSEEKV) is interacts with and activates NS3 protease. Residues 1457–1477 (ALVGAAIHPFALLLVLAGWLF) constitute an intramembrane region (helical). The Cytoplasmic segment spans residues 1478 to 2157 (HVKGARRSGD…RNALSMMPEA (680 aa)). One can recognise a Peptidase S7 domain in the interval 1485 to 1665 (SGDVLWDIPT…EVKEEGKEEL (181 aa)). Active-site charge relay system; for serine protease NS3 activity residues include histidine 1537, aspartate 1561, and serine 1622. Positions 1669–1825 (PTMLKKGMTT…HSNGEIEDVQ (157 aa)) constitute a Helicase ATP-binding domain. Residues 1673–1676 (KKGM) form an important for RNA-binding region. 1682–1689 (FHPGAGKT) serves as a coordination point for ATP. The DEAH box motif lies at 1773–1776 (DEAH). Positions 1820–1997 (EIEDVQTDIP…VRGGMVAPLY (178 aa)) constitute a Helicase C-terminal domain. Lysine 1877 bears the N6-acetyllysine; by host mark. The disordered stretch occupies residues 1942 to 1961 (AAQRRGRIGRNPNRDGDSYY). The helical transmembrane segment at 2158 to 2178 (MTIAMLFILAGLLTSGMVIFF) threads the bilayer. At 2179–2186 (MSPKGISR) the chain is on the lumenal side. An intramembrane region (helical) is located at residues 2187–2207 (MSMAMGTMAGCGYLMFLGGVK). The Lumenal portion of the chain corresponds to 2208-2209 (PT). Residues 2210 to 2230 (HISYIMLIFFVLMVVVIPEPG) form a helical membrane-spanning segment. The Cytoplasmic portion of the chain corresponds to 2231-2241 (QQRSIQDNQVA). Residues 2242–2262 (YLIIGILTLVSVVAANELGML) form a helical membrane-spanning segment. The Lumenal segment spans residues 2263–2293 (EKTKEDLFGKKDLIPSSASPWSWPDLDLKPG). Positions 2294–2314 (AAWTVYVGIVTMLSPMLHHWI) form an intramembrane region, helical. At 2315–2360 (KVEYGNLSLSGIAQSASVLSFMDKGIPFMKMNISVIILLVSGWNSI) the chain is on the lumenal side. Residues 2361–2380 (TVMPLLCGIGCAMLHWSLIL) traverse the membrane as a helical segment. The Cytoplasmic portion of the chain corresponds to 2381 to 2421 (PGIKAQQSKLAQRRVFHGVAKNPVVDGNPTVDIEEAPEMPA). The chain crosses the membrane as a helical span at residues 2422 to 2442 (LYEKKLALYLLLALSLASVAM). Residues 2443–2445 (CRT) lie on the Lumenal side of the membrane. The helical transmembrane segment at 2446–2466 (PFSLAEGIVLASAALGPLIEG) threads the bilayer. At 2467–3411 (NTSLLWNGPM…DADLQPGELI (945 aa)) the chain is on the cytoplasmic side. Positions 2507-2771 (GRANGKTLGE…DVILPIGTRS (265 aa)) constitute an mRNA cap 0-1 NS5-type MT domain. Residue serine 2562 coordinates S-adenosyl-L-methionine. Phosphoserine is present on serine 2562. Lysine 2567 functions as the For 2'-O-MTase activity in the catalytic mechanism. S-adenosyl-L-methionine is bound by residues glycine 2592, tryptophan 2593, threonine 2610, leucine 2611, aspartate 2637, and isoleucine 2638. Aspartate 2652 functions as the For 2'-O-MTase activity in the catalytic mechanism. An S-adenosyl-L-methionine-binding site is contributed by isoleucine 2653. Active-site for 2'-O-MTase activity residues include lysine 2688 and glutamate 2724. Tyrosine 2726 is a binding site for S-adenosyl-L-methionine. A Nuclear localization signal motif is present at residues 2878 to 2911 (RKIMKVVNRWLFRHLAREKNPRLCTKEEFIAKVR). Positions 2945, 2949, 2954, and 2957 each coordinate Zn(2+). Positions 3035 to 3187 (GGFYADDTAG…RPIDDRFGLA (153 aa)) constitute a RdRp catalytic domain. Zn(2+) is bound by residues histidine 3222, cysteine 3238, and cysteine 3357.

The protein in the N-terminal section; belongs to the class I-like SAM-binding methyltransferase superfamily. mRNA cap 0-1 NS5-type methyltransferase family. As to quaternary structure, homodimer. Interacts (via N-terminus) with host EXOC1 (via C-terminus); this interaction results in EXOC1 degradation through the proteasome degradation pathway. In terms of assembly, forms heterodimers with envelope protein E in the endoplasmic reticulum and Golgi. Homodimer; in the endoplasmic reticulum and Golgi. Interacts with protein prM. Interacts with non-structural protein 1. As to quaternary structure, homodimer; Homohexamer when secreted. Interacts with envelope protein E. In terms of assembly, interacts (via N-terminus) with serine protease NS3. Forms a heterodimer with serine protease NS3. May form homooligomers. As to quaternary structure, forms a heterodimer with NS2B. Interacts with non-structural protein 2A (via N-terminus). Interacts with NS4B. Interacts with unphosphorylated RNA-directed RNA polymerase NS5; this interaction stimulates RNA-directed RNA polymerase NS5 guanylyltransferase activity. NS3 interacts with host PDCD6IP; this interaction contributes to virion release. In terms of assembly, interacts with serine protease NS3. Homodimer. Interacts with host STAT2; this interaction prevents the establishment of cellular antiviral state. Interacts with serine protease NS3. Interacts with host TRIM23; this interaction leads to NS5 ubiquitination. Post-translationally, specific enzymatic cleavages in vivo yield mature proteins. The nascent capsid protein C contains a C-terminal hydrophobic domain that act as a signal sequence for translocation of prM into the lumen of the ER. Mature capsid protein C is cleaved at a site upstream of this hydrophobic domain by NS3. prM is cleaved in post-Golgi vesicles by a host furin, releasing the mature small envelope protein M, and peptide pr. Non-structural protein 2A-alpha, a C-terminally truncated form of non-structural protein 2A, results from partial cleavage by NS3. Specific enzymatic cleavages in vivo yield mature proteins peptide 2K acts as a signal sequence and is removed from the N-terminus of NS4B by the host signal peptidase in the ER lumen. Signal cleavage at the 2K-4B site requires a prior NS3 protease-mediated cleavage at the 4A-2K site. Cleaved in post-Golgi vesicles by a host furin, releasing the mature small envelope protein M, and peptide pr. This cleavage is incomplete as up to 30% of viral particles still carry uncleaved prM. In terms of processing, N-glycosylated. Post-translationally, N-glycosylated. The excreted form is glycosylated and this is required for efficient secretion of the protein from infected cells. Polyubiquitinated; ubiquitination is probably mediated by host TRIM23 and is prerequisite for NS5-STAT2 interaction. NS5 is not ISGylated or sumoylated. In terms of processing, acetylated by host KAT5. Acetylation modulates NS3 RNA-binding and unwinding activities and plays an important positive role for viral replication. Post-translationally, phosphorylated on serines residues. This phosphorylation may trigger NS5 nuclear localization.

It localises to the virion. The protein resides in the host nucleus. Its subcellular location is the host cytoplasm. It is found in the host perinuclear region. The protein localises to the secreted. It localises to the virion membrane. The protein resides in the host endoplasmic reticulum membrane. It carries out the reaction Selective hydrolysis of -Xaa-Xaa-|-Yaa- bonds in which each of the Xaa can be either Arg or Lys and Yaa can be either Ser or Ala.. The enzyme catalyses RNA(n) + a ribonucleoside 5'-triphosphate = RNA(n+1) + diphosphate. The catalysed reaction is a ribonucleoside 5'-triphosphate + H2O = a ribonucleoside 5'-diphosphate + phosphate + H(+). It catalyses the reaction ATP + H2O = ADP + phosphate + H(+). It carries out the reaction a 5'-end (5'-triphosphoguanosine)-ribonucleoside in mRNA + S-adenosyl-L-methionine = a 5'-end (N(7)-methyl 5'-triphosphoguanosine)-ribonucleoside in mRNA + S-adenosyl-L-homocysteine. The enzyme catalyses a 5'-end (N(7)-methyl 5'-triphosphoguanosine)-ribonucleoside in mRNA + S-adenosyl-L-methionine = a 5'-end (N(7)-methyl 5'-triphosphoguanosine)-(2'-O-methyl-ribonucleoside) in mRNA + S-adenosyl-L-homocysteine + H(+). Functionally, plays a role in virus budding by binding to the cell membrane and gathering the viral RNA into a nucleocapsid that forms the core of a mature virus particle. During virus entry, may induce genome penetration into the host cytoplasm after hemifusion induced by the surface proteins. Can migrate to the cell nucleus where it modulates host functions. Its function is as follows. Inhibits RNA silencing by interfering with host Dicer. Prevents premature fusion activity of envelope proteins in trans-Golgi by binding to envelope protein E at pH6.0. After virion release in extracellular space, gets dissociated from E dimers. In terms of biological role, acts as a chaperone for envelope protein E during intracellular virion assembly by masking and inactivating envelope protein E fusion peptide. prM is the only viral peptide matured by host furin in the trans-Golgi network probably to avoid catastrophic activation of the viral fusion activity in acidic Golgi compartment prior to virion release. prM-E cleavage is inefficient, and many virions are only partially matured. These uncleaved prM would play a role in immune evasion. Functionally, may play a role in virus budding. Exerts cytotoxic effects by activating a mitochondrial apoptotic pathway through M ectodomain. May display a viroporin activity. Its function is as follows. Binds to host cell surface receptor and mediates fusion between viral and cellular membranes. Envelope protein is synthesized in the endoplasmic reticulum in the form of heterodimer with protein prM. They play a role in virion budding in the ER, and the newly formed immature particle is covered with 60 spikes composed of heterodimer between precursor prM and envelope protein E. The virion is transported to the Golgi apparatus where the low pH causes dissociation of PrM-E heterodimers and formation of E homodimers. prM-E cleavage is inefficient, and many virions are only partially matured. These uncleaved prM would play a role in immune evasion. Involved in immune evasion, pathogenesis and viral replication. Once cleaved off the polyprotein, is targeted to three destinations: the viral replication cycle, the plasma membrane and the extracellular compartment. Essential for viral replication. Required for formation of the replication complex and recruitment of other non-structural proteins to the ER-derived membrane structures. Excreted as a hexameric lipoparticle that plays a role against host immune response. Antagonizing the complement function. Binds to the host macrophages and dendritic cells. Inhibits signal transduction originating from Toll-like receptor 3 (TLR3). In terms of biological role, component of the viral RNA replication complex that functions in virion assembly and antagonizes the host immune response. Functionally, required cofactor for the serine protease function of NS3. May have membrane-destabilizing activity and form viroporins. Its function is as follows. Displays three enzymatic activities: serine protease, NTPase and RNA helicase. NS3 serine protease, in association with NS2B, performs its autocleavage and cleaves the polyprotein at dibasic sites in the cytoplasm: C-prM, NS2A-NS2B, NS2B-NS3, NS3-NS4A, NS4A-2K and NS4B-NS5. NS3 RNA helicase binds RNA and unwinds dsRNA in the 3' to 5' direction. Also plays a role in virus assembly. Regulates the ATPase activity of the NS3 helicase activity. NS4A allows NS3 helicase to conserve energy during unwinding. In terms of biological role, functions as a signal peptide for NS4B and is required for the interferon antagonism activity of the latter. Functionally, induces the formation of ER-derived membrane vesicles where the viral replication takes place. Inhibits interferon (IFN)-induced host STAT1 phosphorylation and nuclear translocation, thereby preventing the establishment of cellular antiviral state by blocking the IFN-alpha/beta pathway. Its function is as follows. Replicates the viral (+) and (-) RNA genome, and performs the capping of genomes in the cytoplasm. NS5 methylates viral RNA cap at guanine N-7 and ribose 2'-O positions. Besides its role in RNA genome replication, also prevents the establishment of cellular antiviral state by blocking the interferon-alpha/beta (IFN-alpha/beta) signaling pathway. IFN-I induces binding of NS5 to host IFN-activated transcription factor STAT2, preventing its transcriptional activity. Host TRIM23 is the E3 ligase that interacts with and polyubiquitinates NS5 to promote its binding to STAT2 and trigger IFN-I signaling inhibition. The chain is Genome polyprotein from Yellow fever virus (isolate Ivory Coast/1999) (YFV).